The chain runs to 360 residues: Phosphoserine aminotransferase (360 aa).

Residue R42 participates in L-glutamate binding. Pyridoxal 5'-phosphate contacts are provided by residues 76–77 (AR), W102, T153, D172, and Q195. K196 is subject to N6-(pyridoxal phosphate)lysine. 237–238 (NT) is a pyridoxal 5'-phosphate binding site.

Belongs to the class-V pyridoxal-phosphate-dependent aminotransferase family. SerC subfamily. As to quaternary structure, homodimer. The cofactor is pyridoxal 5'-phosphate.

It localises to the cytoplasm. The enzyme catalyses O-phospho-L-serine + 2-oxoglutarate = 3-phosphooxypyruvate + L-glutamate. The catalysed reaction is 4-(phosphooxy)-L-threonine + 2-oxoglutarate = (R)-3-hydroxy-2-oxo-4-phosphooxybutanoate + L-glutamate. It functions in the pathway amino-acid biosynthesis; L-serine biosynthesis; L-serine from 3-phospho-D-glycerate: step 2/3. It participates in cofactor biosynthesis; pyridoxine 5'-phosphate biosynthesis; pyridoxine 5'-phosphate from D-erythrose 4-phosphate: step 3/5. Catalyzes the reversible conversion of 3-phosphohydroxypyruvate to phosphoserine and of 3-hydroxy-2-oxo-4-phosphonooxybutanoate to phosphohydroxythreonine. The polypeptide is Phosphoserine aminotransferase (Photobacterium profundum (strain SS9)).